The following is a 313-amino-acid chain: HPr kinase/phosphorylase (313 aa).

Residues H140 and K161 contribute to the active site. ATP is bound at residue G155 to S162. S162 contributes to the Mg(2+) binding site. The Proton acceptor; for phosphorylation activity. Proton donor; for dephosphorylation activity role is filled by D179. The interval I203 to N212 is important for the catalytic mechanism of both phosphorylation and dephosphorylation. E204 serves as a coordination point for Mg(2+). R246 is an active-site residue. The segment at P267–R272 is important for the catalytic mechanism of dephosphorylation.

The protein belongs to the HPrK/P family. As to quaternary structure, homohexamer. Mg(2+) serves as cofactor.

The catalysed reaction is [HPr protein]-L-serine + ATP = [HPr protein]-O-phospho-L-serine + ADP + H(+). The enzyme catalyses [HPr protein]-O-phospho-L-serine + phosphate + H(+) = [HPr protein]-L-serine + diphosphate. In terms of biological role, catalyzes the ATP- as well as the pyrophosphate-dependent phosphorylation of a specific serine residue in HPr, a phosphocarrier protein of the phosphoenolpyruvate-dependent sugar phosphotransferase system (PTS). HprK/P also catalyzes the pyrophosphate-producing, inorganic phosphate-dependent dephosphorylation (phosphorolysis) of seryl-phosphorylated HPr (P-Ser-HPr). The protein is HPr kinase/phosphorylase of Azoarcus sp. (strain BH72).